Reading from the N-terminus, the 347-residue chain is Eukaryotic translation initiation factor 3 subunit H (347 aa).

The region spanning 6–149 is the MPN domain; that stretch reads VCIDSSVALK…PSSTGPQGHT (144 aa). The tract at residues 136–155 is disordered; that stretch reads SDTDPSSTGPQGHTTTTPSG. Polar residues predominate over residues 138–155; sequence TDPSSTGPQGHTTTTPSG.

The protein belongs to the eIF-3 subunit H family. In terms of assembly, component of the eukaryotic translation initiation factor 3 (eIF-3) complex.

It is found in the cytoplasm. Component of the eukaryotic translation initiation factor 3 (eIF-3) complex, which is involved in protein synthesis of a specialized repertoire of mRNAs and, together with other initiation factors, stimulates binding of mRNA and methionyl-tRNAi to the 40S ribosome. The eIF-3 complex specifically targets and initiates translation of a subset of mRNAs involved in cell proliferation. The sequence is that of Eukaryotic translation initiation factor 3 subunit H from Yarrowia lipolytica (strain CLIB 122 / E 150) (Yeast).